A 66-amino-acid polypeptide reads, in one-letter code: Large ribosomal subunit protein uL29 (66 aa).

Belongs to the universal ribosomal protein uL29 family.

This chain is Large ribosomal subunit protein uL29, found in Bartonella tribocorum (strain CIP 105476 / IBS 506).